Consider the following 104-residue polypeptide: uncharacterized protein (104 aa).

Disordered stretches follow at residues 1 to 20 and 83 to 104; these read MTETSTAKVATTKKSTTTRK and TASASSSGKKVVASKKKVVAKK. A compositionally biased stretch (low complexity) spans 83–93; sequence TASASSSGKKV. Residues 94–104 are compositionally biased toward basic residues; it reads VASKKKVVAKK.

This is an uncharacterized protein from Dictyostelium discoideum (Social amoeba).